We begin with the raw amino-acid sequence, 180 residues long: RNA polymerase sigma-E factor (180 aa).

Residues 36–49 carry the Polymerase core binding motif; it reads DLLQTALARTYGRW. The H-T-H motif DNA-binding region spans 130–149; that stretch reads TEETAAALGMSAGTVKSTLH.

It belongs to the sigma-70 factor family. ECF subfamily.

It is found in the cytoplasm. In terms of biological role, sigma factors are initiation factors that promote the attachment of RNA polymerase to specific initiation sites and are then released. This sigma factor is required for the synthesis of the antibiotic actinomycin. The polypeptide is RNA polymerase sigma-E factor (sigE) (Streptomyces antibioticus).